Here is a 219-residue protein sequence, read N- to C-terminus: Ribose-5-phosphate isomerase A (219 aa).

Substrate contacts are provided by residues 28-31 (SGST), 81-84 (DGAD), and 94-97 (KGGG). The Proton acceptor role is filled by Glu103. Lys121 lines the substrate pocket.

Belongs to the ribose 5-phosphate isomerase family. Homodimer.

The catalysed reaction is aldehydo-D-ribose 5-phosphate = D-ribulose 5-phosphate. Its pathway is carbohydrate degradation; pentose phosphate pathway; D-ribose 5-phosphate from D-ribulose 5-phosphate (non-oxidative stage): step 1/1. In terms of biological role, catalyzes the reversible conversion of ribose-5-phosphate to ribulose 5-phosphate. This chain is Ribose-5-phosphate isomerase A, found in Glaesserella parasuis serovar 5 (strain SH0165) (Haemophilus parasuis).